We begin with the raw amino-acid sequence, 199 residues long: FMN-dependent NADH:quinone oxidoreductase (199 aa).

An FMN-binding site is contributed by Ser-10.

This sequence belongs to the azoreductase type 1 family. As to quaternary structure, homodimer. Requires FMN as cofactor.

It carries out the reaction 2 a quinone + NADH + H(+) = 2 a 1,4-benzosemiquinone + NAD(+). It catalyses the reaction N,N-dimethyl-1,4-phenylenediamine + anthranilate + 2 NAD(+) = 2-(4-dimethylaminophenyl)diazenylbenzoate + 2 NADH + 2 H(+). Its function is as follows. Quinone reductase that provides resistance to thiol-specific stress caused by electrophilic quinones. In terms of biological role, also exhibits azoreductase activity. Catalyzes the reductive cleavage of the azo bond in aromatic azo compounds to the corresponding amines. In Cellvibrio japonicus (strain Ueda107) (Pseudomonas fluorescens subsp. cellulosa), this protein is FMN-dependent NADH:quinone oxidoreductase.